A 486-amino-acid chain; its full sequence is Membrane-bound lytic murein transglycosylase F (486 aa).

The first 26 residues, 1-26 (MFSPMALRPRCAKWLIVTGLFLMLGA), serve as a signal peptide directing secretion. Residues 27 to 267 (CVEKPSTLER…RLKDRYYGHV (241 aa)) are non-LT domain. An LT domain region spans residues 268–486 (DVLGYVGAYT…TKPPEENPPL (219 aa)). Residue Glu314 is part of the active site. A disordered region spans residues 464 to 486 (VAEGNLHVPGVNKTKPPEENPPL).

The protein in the N-terminal section; belongs to the bacterial solute-binding protein 3 family. It in the C-terminal section; belongs to the transglycosylase Slt family.

It is found in the cell outer membrane. It catalyses the reaction Exolytic cleavage of the (1-&gt;4)-beta-glycosidic linkage between N-acetylmuramic acid (MurNAc) and N-acetylglucosamine (GlcNAc) residues in peptidoglycan, from either the reducing or the non-reducing ends of the peptidoglycan chains, with concomitant formation of a 1,6-anhydrobond in the MurNAc residue.. Functionally, murein-degrading enzyme that degrades murein glycan strands and insoluble, high-molecular weight murein sacculi, with the concomitant formation of a 1,6-anhydromuramoyl product. Lytic transglycosylases (LTs) play an integral role in the metabolism of the peptidoglycan (PG) sacculus. Their lytic action creates space within the PG sacculus to allow for its expansion as well as for the insertion of various structures such as secretion systems and flagella. The chain is Membrane-bound lytic murein transglycosylase F from Pseudomonas fluorescens (strain ATCC BAA-477 / NRRL B-23932 / Pf-5).